The following is a 253-amino-acid chain: Glucosamine-6-phosphate deaminase (253 aa).

Aspartate 67 functions as the Proton acceptor; for enolization step in the catalytic mechanism. Catalysis depends on asparagine 136, which acts as the For ring-opening step. The active-site Proton acceptor; for ring-opening step is the histidine 138. Residue glutamate 143 is the For ring-opening step of the active site.

Belongs to the glucosamine/galactosamine-6-phosphate isomerase family. NagB subfamily.

It carries out the reaction alpha-D-glucosamine 6-phosphate + H2O = beta-D-fructose 6-phosphate + NH4(+). The protein operates within amino-sugar metabolism; N-acetylneuraminate degradation; D-fructose 6-phosphate from N-acetylneuraminate: step 5/5. Functionally, catalyzes the reversible isomerization-deamination of glucosamine 6-phosphate (GlcN6P) to form fructose 6-phosphate (Fru6P) and ammonium ion. The sequence is that of Glucosamine-6-phosphate deaminase from Thermoanaerobacter pseudethanolicus (strain ATCC 33223 / 39E) (Clostridium thermohydrosulfuricum).